The chain runs to 159 residues: Eukaryotic translation initiation factor 5A-1 (159 aa).

Over residues 1-12 the composition is skewed to basic and acidic residues; that stretch reads MSDEEHHFESKA. A disordered region spans residues 1-23; that stretch reads MSDEEHHFESKADAGASKTYPQQ. Lysine 52 bears the Hypusine mark.

It belongs to the eIF-5A family. Lys-52 undergoes hypusination, a unique post-translational modification that consists in the addition of a butylamino group from spermidine to lysine side chain, leading to the formation of the unusual amino acid hypusine. eIF-5As are the only known proteins to undergo this modification, which is essential for their function.

Functionally, translation factor that promotes translation elongation and termination, particularly upon ribosome stalling at specific amino acid sequence contexts. Binds between the exit (E) and peptidyl (P) site of the ribosome and promotes rescue of stalled ribosome: specifically required for efficient translation of polyproline-containing peptides as well as other motifs that stall the ribosome. Acts as a ribosome quality control (RQC) cofactor by joining the RQC complex to facilitate peptidyl transfer during CAT tailing step. This Solanum lycopersicum (Tomato) protein is Eukaryotic translation initiation factor 5A-1.